We begin with the raw amino-acid sequence, 119 residues long: Probable non-functional T cell receptor gamma variable 10 (119 aa).

An N-terminal signal peptide occupies residues 1–19 (MSLLEAFAFSSWALGLGLS). The Ig-like domain maps to 24–119 (FQLSISTEVK…MAVYYCAAWD (96 aa)). An intrachain disulfide couples cysteine 40 to cysteine 115.

In terms of assembly, gamma-delta TR is a heterodimer composed of a gamma and delta chain; disulfide-linked. The gamma-delta TR is associated with the transmembrane signaling CD3 coreceptor proteins following the stoichiometry: a single gamma-delta TR heterodimer associates with one CD3D-CD3E heterodimer, one CD3G-CD3E heterodimer and one CD247 homodimer forming a stable octameric structure. Upon activation, gamma-delta TR complex associates with FCER1G to initiate intracellular signaling.

It is found in the cell membrane. Its function is as follows. Probable non-functional open reading frame (ORF) of V region of the variable domain of T cell receptor (TR) gamma chain. Non-functional ORF generally cannot participate in the synthesis of a productive T cell receptor (TR) chain due to altered V-(D)-J or switch recombination and/or splicing site (at mRNA level) and/or conserved amino acid change (protein level). Gamma-delta TRs recognize a variety of self and foreign non-peptide antigens frequently expressed at the epithelial boundaries between the host and external environment, including endogenous lipids presented by MH-like protein CD1D and phosphoantigens presented by butyrophilin-like molecule BTN3A1. Upon antigen recognition induces rapid, innate-like immune responses involved in pathogen clearance and tissue repair. Binding of gamma-delta TR complex to antigen triggers phosphorylation of immunoreceptor tyrosine-based activation motifs (ITAMs) in the CD3 chains by the LCK and FYN kinases, allowing the recruitment, phosphorylation, and activation of ZAP70 that facilitates phosphorylation of the scaffolding proteins LCP2 and LAT. This lead to the formation of a supramolecular signalosome that recruits the phospholipase PLCG1, resulting in calcium mobilization and ERK activation, ultimately leading to T cell expansion and differentiation into effector cells. Gamma-delta TRs are produced through somatic rearrangement of a limited repertoire of variable (V), diversity (D), and joining (J) genes. The potential diversity of gamma-delta TRs is conferred by the unique ability to rearrange (D) genes in tandem and to utilize all three reading frames. The combinatorial diversity is considerably increased by the sequence exonuclease trimming and random nucleotide (N) region additions which occur during the V-(D)-J rearrangements. The sequence is that of Probable non-functional T cell receptor gamma variable 10 from Homo sapiens (Human).